A 263-amino-acid chain; its full sequence is NADH dehydrogenase [ubiquinone] iron-sulfur protein 3, mitochondrial (263 aa).

The N-terminal 35 residues, 1 to 35, are a transit peptide targeting the mitochondrion; that stretch reads MVAAVARLWWRGLLGASALTRGAGRPSVLLLPVRR.

It belongs to the complex I 30 kDa subunit family. As to quaternary structure, core subunit of respiratory chain NADH dehydrogenase (Complex I) which is composed of 45 different subunits. Interacts with NDUFAF3. Interacts with RAB5IF. Found in subcomplexes containing subunits NDUFS2, MT-ND1 and NDUFA13.

It is found in the mitochondrion inner membrane. It catalyses the reaction a ubiquinone + NADH + 5 H(+)(in) = a ubiquinol + NAD(+) + 4 H(+)(out). Functionally, core subunit of the mitochondrial membrane respiratory chain NADH dehydrogenase (Complex I) which catalyzes electron transfer from NADH through the respiratory chain, using ubiquinone as an electron acceptor. Essential for the catalytic activity and assembly of complex I. This chain is NADH dehydrogenase [ubiquinone] iron-sulfur protein 3, mitochondrial (NDUFS3), found in Gorilla gorilla gorilla (Western lowland gorilla).